An 80-amino-acid polypeptide reads, in one-letter code: Conotoxin Ca11.3 (80 aa).

Residues 1 to 19 (MKLVLAIVVILMLLSLSTG) form the signal peptide. The propeptide occupies 20 to 42 (AEMSDNHASRSATALRDRLLSPK). 4 disulfide bridges follow: cysteine 46-cysteine 60, cysteine 53-cysteine 65, cysteine 59-cysteine 72, and cysteine 64-cysteine 79.

The protein belongs to the conotoxin I3 superfamily. In terms of tissue distribution, expressed by the venom duct.

The protein localises to the secreted. This Conus caracteristicus (Characteristic cone) protein is Conotoxin Ca11.3.